The chain runs to 285 residues: Methylamine utilization protein MauF (285 aa).

7 helical membrane-spanning segments follow: residues 39–59 (LGGLVTAVSGGILGAALLSQT), 63–83 (GVAVPALLMGLSFVGGLLSTW), 120–140 (AVGALILGCVLGIAGGLLGFG), 144–164 (FGALAGLGAAGIIYGAHQLGF), 184–204 (FPVWFIGGLYGLSLGLNYLTY), 209–229 (ILYLVTAAAVLSSNIGAAILL), and 265–285 (ALLDGVLLVAGGAALLTFAAL).

It is found in the cell membrane. Its pathway is one-carbon metabolism; methylamine degradation. The protein is Methylamine utilization protein MauF (mauF) of Methylorubrum extorquens (strain ATCC 14718 / DSM 1338 / JCM 2805 / NCIMB 9133 / AM1) (Methylobacterium extorquens).